We begin with the raw amino-acid sequence, 323 residues long: Olfactory receptor 1E2 (323 aa).

Residues 1-25 are Extracellular-facing; that stretch reads MMGQNQTSISDFLLLGLPIQPEQQN. Residue N5 is glycosylated (N-linked (GlcNAc...) asparagine). The chain crosses the membrane as a helical span at residues 26–49; that stretch reads LCYALFLAMYLTTLLGNLLIIVLI. Over 50–57 the chain is Cytoplasmic; it reads RLDSHLHT. A helical transmembrane segment spans residues 58 to 79; that stretch reads PVYLFLSNLSFSDLCFSSVTMP. At 80–100 the chain is on the extracellular side; sequence KLLQNMQNQDPSIPYADCLTQ. Cysteines 97 and 198 form a disulfide. Residues 101–120 form a helical membrane-spanning segment; the sequence is MYFFLYFSDLESFLLVAMAY. The Cytoplasmic segment spans residues 121–148; sequence DRYVAICFPMHYTAICFLLHYTAIMSPM. A helical membrane pass occupies residues 149–167; sequence LCLSVVALSWVLTTFHAML. The Extracellular portion of the chain corresponds to 168 to 205; that stretch reads HTLLMARLCFCADNVIPHFFCDMSALLKLACSDTRVNE. The helical transmembrane segment at 206–228 threads the bilayer; sequence WVIFIMGGLILVIPFLLILGSYA. Residues 229–245 are Cytoplasmic-facing; sequence RIVSSILKVPSSKGICK. Residues 246 to 269 traverse the membrane as a helical segment; that stretch reads AFSTCGSHLSVVSLFYGTVIGLYL. Residues 270–281 are Extracellular-facing; sequence CPSANSSTLKDT. N-linked (GlcNAc...) asparagine glycosylation occurs at N274. A helical membrane pass occupies residues 282-301; it reads VMAMMYTVVTPMLTPFIYSL. Residues 302 to 323 lie on the Cytoplasmic side of the membrane; it reads RNRDMKGALERVICKRKNPFLL.

It belongs to the G-protein coupled receptor 1 family.

Its subcellular location is the cell membrane. Functionally, odorant receptor. The sequence is that of Olfactory receptor 1E2 (OR1E2) from Homo sapiens (Human).